Consider the following 1307-residue polypeptide: Cyclic nucleotide-gated channel beta-1 (1307 aa).

Disordered stretches follow at residues 1–101 (MLGW…AQVA), 126–178 (QPVY…TEPS), 193–262 (LPQP…PGDP), 320–458 (DSCW…LDSC), 470–625 (LERA…SQNS), and 648–681 (EKLIDPDVTSDEESPKPSPAKKAPDSAPAQKPAE). Topologically, residues 1 to 720 (MLGWVQRVLP…SIDPLTNLMY (720 aa)) are cytoplasmic. Over residues 43 to 59 (VQPEPEPEPEPAPEEAA) the composition is skewed to acidic residues. A compositionally biased stretch (basic and acidic residues) spans 165 to 174 (GSDKTSKTQD). Positions 361 to 386 (QEEEEEEKEEKEEKEEEEEKEEEEKR) are enriched in acidic residues. Residues 387–406 (EEEKKKEKEEEKKEKEKEEK) are compositionally biased toward basic and acidic residues. Composition is skewed to acidic residues over residues 407–451 (EEKE…EEEP) and 483–518 (LPEEEEEKEEEKKEEEEEKEEEEEKEEEEEKEEEGE). The segment covering 550-560 (TIPPPERPPVS) has biased composition (pro residues). A calmodulin-binding CaM1 region spans residues 621–631 (ASQNSAIINDR). A helical transmembrane segment spans residues 721–742 (ILWLFFVVLAWNWNCWLIPVRW). Topologically, residues 743 to 751 (AFPYQRADN) are extracellular. The helical transmembrane segment at 752–773 (IHLWLLMDYLCDFIYLLDITVF) threads the bilayer. Residues 774–788 (QMRLQFVKGGDIITD) are Cytoplasmic-facing. The chain crosses the membrane as a helical span at residues 789 to 808 (KKEMRNNYLKSQRFKMDLLC). Topologically, residues 809–824 (LLPLDFLYLKLGVNPL) are extracellular. The helical transmembrane segment at 825-837 (LRLPRCLKYMAFF) threads the bilayer. Residues 838–849 (EFNNRLEAILSK) lie on the Cytoplasmic side of the membrane. A helical transmembrane segment spans residues 850 to 872 (AYVYRVIRTTAYLLYSLHLNSCL). Positions 850 to 949 (AYVYRVIRTT…IGQMRDVVGA (100 aa)) are ion conduction pathway. Topologically, residues 873 to 895 (YYWASAFQGIGSTHWVYDGVGNS) are extracellular. Transmembrane regions (helical) follow at residues 896–922 (YIRCYYWAVKTLITIGGLPDPQTLFEI) and 923–948 (VFQLLNYFTGVFAFSVMIGQMRDVVG). Residues 949–1307 (AATAGQTYYR…MLEEKKEEVE (359 aa)) are Cytoplasmic-facing. Residues 952–1028 (AGQTYYRSCM…NIVSKVALFQ (77 aa)) form a C-linker region. Residues 1026 to 1130 (LFQGCDRQMI…LDKKDLNEIL (105 aa)) are cNMP-binding domain. The segment at 1032-1148 (RQMIFDMLKR…LLRKKARRML (117 aa)) is cyclic nucleotide-binding domain. 3',5'-cyclic GMP is bound by residues Gly1093, Glu1094, Ser1096, Arg1106, and Thr1107. Arg1106 provides a ligand contact to 3',5'-cyclic AMP. The calmodulin-binding CaM2 stretch occupies residues 1212–1218 (QQQLLEQ). The segment covering 1214-1238 (QLLEQAKSSQEAGGEEGSGATDQPA) has biased composition (low complexity). The disordered stretch occupies residues 1214–1307 (QLLEQAKSSQ…MLEEKKEEVE (94 aa)). The span at 1250 to 1261 (EPPAPSSPPPAS) shows a compositional bias: pro residues.

It belongs to the cyclic nucleotide-gated cation channel (TC 1.A.1.5) family. CNGB1 subfamily. In terms of assembly, the rod cyclic nucleotide-gated channel is a heterotetramer composed of CNGA1 and CNGB1 subunits with 3:1 stoichiometry. CNGA1:CNGB1 channel binds Ca(2+)-bound CALM1 via CaM1 and CaM2 regions of the CNGB1 subunit; this interaction modulates the affinity of the channel for cNMPs in response to intracellular Ca(2+) levels. As to quaternary structure, the olfactory cyclic nucleotide-gated channel is a heterotetramer composed of CNGA2, CNGA4 and CNGB1b subunits with 2:1:1 stoichiometry. Expressed in olfactory sensory cilia (at protein level).

The protein localises to the cell projection. Its subcellular location is the cilium membrane. The catalysed reaction is Ca(2+)(in) = Ca(2+)(out). It carries out the reaction Na(+)(in) = Na(+)(out). The enzyme catalyses K(+)(in) = K(+)(out). It catalyses the reaction NH4(+)(in) = NH4(+)(out). The catalysed reaction is Rb(+)(in) = Rb(+)(out). It carries out the reaction Li(+)(in) = Li(+)(out). The enzyme catalyses Cs(+)(in) = Cs(+)(out). In terms of biological role, pore-forming subunit of the rod cyclic nucleotide-gated channel. Mediates rod photoresponses at dim light converting transient changes in intracellular cGMP levels into electrical signals. In the dark, cGMP levels are high and keep the channel open enabling a steady inward current carried by Na(+) and Ca(2+) ions that leads to membrane depolarization and neurotransmitter release from synaptic terminals. Upon photon absorption cGMP levels decline leading to channel closure and membrane hyperpolarization that ultimately slows neurotransmitter release and signals the presence of light, the end point of the phototransduction cascade. Conducts cGMP- and cAMP-gated ion currents, with permeability for monovalent and divalent cations. The selectivity for Ca(2+) over Na(+) increases with cGMP concentrations, whereas the selectivity among monovalent ions is independent of the cGMP levels. Pore-forming subunit of the olfactory cyclic nucleotide-gated channel. Operates in the cilia of olfactory sensory neurons where chemical stimulation of the odorant is converted to an electrical signal. Mediates odorant-induced cAMP-dependent Ca(2+) influx triggering neuron depolarization. The rise of intracellular Ca(2+) levels potentiates the olfactory response by activating Ca(2+)-dependent Cl(-) channels, but it also serves as a negative feedback signal to desensitize the channel for rapid adaptation to odorants. The chain is Cyclic nucleotide-gated channel beta-1 from Rattus norvegicus (Rat).